The following is a 248-amino-acid chain: MAEAFTREDYVFMAQLNENAERYDEMVETMRKISGMEGELSDKERNLLSVAYKNVIGPRRAAWRIVSSIEAKEKGRQKPNAKRIEQIRVYRQKIEKELSDICNDILKLLQEQFVPRSTNADAKVFYYKMQGDYYRYLAEYSSGEDKEKIAGSALNAYNSAFEISQQLPPTHPIRLGLALNFSVFYYEILASPDRACELARKAFDAAITDLDKLTEESYKDSTLIMQLLRDNLNLWVTDSAGDDNAEEK.

Coiled coils occupy residues Met-13–Ile-33 and Arg-91–Glu-111. Arg-135–Tyr-136 is an O-phospho-L-serine binding site. At Thr-214 the chain carries Phosphothreonine. The Putative polyglycylation target motif (T/G)X0-1(D/E)X1-3-G(D/E)X1-2(gE)2-4, where X is polar or negatively charged amino acid, and gE is polyglycylated glutamine motif lies at Thr-237–Lys-248. Position 246 is a 5-glutamyl polyglycine (Glu-246).

Belongs to the 14-3-3 family. As to quaternary structure, homodimer. Homodimerizes via N-terminal domains. Oligomerizes forming homotrimers, homotetramers and protein filaments. Oligomerization is hindered by polyglycylation in vivo. Interacts with a large number of both cytosolic and membrane proteins in trophozoites and encysting parasites. Interacts with a serine/threonine protein kinase GL50803_112076 (gCDC7). Component of a multiprotein complex containing gCDC7 and GL50803_94117 (gDBF4), a regulatory subunit of gCDC7, during both the trophozoite and encysting stages of the parasite. Interacts with fructose-bisphosphate aldolase GL50803_11043 (gFBA), pyruvate kinase GL50803_17143 (gPyk), acetyl-CoA synthetase GL50803_13608 (gACS), protein kinase GL50803_22165 (gSTE), DEAD box RNA helicase GL50803_34684 (gVASA) and Golgi/cell cycle associated protein GL50803_17472 (gGCCA). Interacts with actin. Interacts with both monomeric phosphorylated and unphosphorylated actin. The interaction is enhanced by phosphorylation of actin and inhibited by Rho GTPase Rac. Post-translationally, phosphorylated constitutively throughout the life cycle. Phosphorylation is very high in trophozoites and encysting cells of 12 hours. Phosphorylated during excystation. Phosphorylation promotes its binding to various target proteins and is critical for encystation process. Phosphorylation modification is not influenced by polyglycylation modification. In terms of processing, polyglycylated on a glutamate residue, resulting in polyglycine chain on the gamma-carboxyl group. Polyglycylated by the tubulin--tyrosine ligase-like protein GL50803_8456 (gTTLL3). The polyglycine chain is shortened by metallopeptidases of the M20 family, namely dipeptidases GL50803_15832 (gDIP1) and GL50803_8407 (gDIP2). The length of the polyglycine chain is developmental stage-dependent. In trophozoites, glycine residues range from 10 to 31, with the greatest occurrence of 21 residues. In 12 hour encystation stage, glycine residues range from 6 to 22, with the greatest occurrence of 10 residues. The differential rate of polyglycylation/deglycylation during the encystation process regulates the intracellular localization of this protein. Relocalizes partially from the cytoplasm inside the nuclei following the shortening of the polyglycine chain in encysting cells. Polyglycylation modification is not influenced by phosphorylation modification. Polyglycylation prevents oligomerization in vivo.

It localises to the cytoplasm. The protein localises to the cytoskeleton. It is found in the nucleus. The protein resides in the cell projection. Its subcellular location is the cilium. It localises to the flagellum. The protein localises to the spindle. It is found in the nucleus envelope. The protein resides in the endoplasmic reticulum. Functionally, adapter protein implicated in the regulation of a large spectrum of both general and specialized signaling pathways. Binds to a large number of partners, usually by recognition of a phosphoserine or phosphothreonine motif. Binding generally results in the modulation of the activity of the binding partner. Binds with varying affinity to various synthetic phosphopeptides having a consensus binding motif RSX(pS/pT)XP, called mode-1, where X is any residue and pS/pT is a phosphorylated serine/threonine, and to synthetic phosphopeptides having a consensus binding motif Xp(S/T)X1-2-COOH, called mode-3, in which the phosphorylated residue occupies the penultimate C-terminal position in the target protein, but does not bind to their unphosphorylated counterparts. Binds to synthetic human RAF1 phosphopeptides, but not to their unphosphorylated forms. Binds to difopein, a polypeptide containing a phosphorylation-independent binding motif. Involved in encystation. Involved in cell proliferation. Required for actin and tubulin cytoskeletal organization. Regulates actin filament formation and nuclear size. The sequence is that of 14-3-3 protein from Giardia intestinalis (strain ATCC 50803 / WB clone C6) (Giardia lamblia).